The chain runs to 350 residues: MLPRLGCVLFCSLVVLLLSCLLLLKERIPAGSSKAHQQFLALPRSHHSQCSPNLTVVNTSLSLPSRHRLFLTYRHCRNFSILLEPSECARDTFLLLVIKSQPAHIEQRSAIRSTWGRAGSWARGRQLKLVFLLGVAGPVPPAQLLVYESWQFDDILQWDFAEDFFNLTLKELHVQRWIAAACTQAHFILKGDDDVFIHVPNVLEFLEGWDPAQDFLVGDVIRLARPNRNTKVKYFIPFSMYRARHYPPYAGGGGYVMSQATVRHLHMAMEEAELFPIDDVFVGMCLRKLGVTPIHHAGFKTFGIQQPLNPRDPCLYKGLLLVHRLSPLEMWTMWALVTDERLKCAATHKP.

Residues 1–4 (MLPR) lie on the Cytoplasmic side of the membrane. Residues 5 to 25 (LGCVLFCSLVVLLLSCLLLLK) form a helical; Signal-anchor for type II membrane protein membrane-spanning segment. The Lumenal portion of the chain corresponds to 26 to 350 (ERIPAGSSKA…RLKCAATHKP (325 aa)). 2 N-linked (GlcNAc...) asparagine glycosylation sites follow: asparagine 53 and asparagine 166.

Belongs to the glycosyltransferase 31 family.

Its subcellular location is the golgi apparatus membrane. It carries out the reaction a beta-D-galactosyl-(1-&gt;4)-N-acetyl-beta-D-glucosaminyl derivative + UDP-N-acetyl-alpha-D-glucosamine = an N-acetyl-beta-D-glucosaminyl-(1-&gt;3)-beta-D-galactosyl-(1-&gt;4)-N-acetyl-beta-D-glucosaminyl derivative + UDP + H(+). It functions in the pathway protein modification; protein glycosylation. Functionally, beta-1,3-N-acetylglucosaminyltransferase involved in the synthesis of poly-N-acetyllactosamine. Has activity for type 2 oligosaccharides. This Mus musculus (Mouse) protein is N-acetyllactosaminide beta-1,3-N-acetylglucosaminyltransferase 4 (B3gnt4).